The chain runs to 143 residues: EKC/KEOPS complex subunit LAGE3 (143 aa).

The disordered stretch occupies residues 1–57; sequence MRDADADAGGGADGGDGRGGHSCRGGVDTAAAPAGGAPPAHAPGPGRDAASAARGSR. The span at 30 to 55 shows a compositional bias: low complexity; that stretch reads AAAPAGGAPPAHAPGPGRDAASAARG.

The protein belongs to the CTAG/PCC1 family. In terms of assembly, component of the EKC/KEOPS complex composed of at least GON7, TP53RK, TPRKB, OSGEP and LAGE3; the whole complex dimerizes. Ubiquitous.

Its subcellular location is the cytoplasm. It is found in the nucleus. In terms of biological role, component of the EKC/KEOPS complex that is required for the formation of a threonylcarbamoyl group on adenosine at position 37 (t(6)A37) in tRNAs that read codons beginning with adenine. The complex is probably involved in the transfer of the threonylcarbamoyl moiety of threonylcarbamoyl-AMP (TC-AMP) to the N6 group of A37. LAGE3 functions as a dimerization module for the complex. The chain is EKC/KEOPS complex subunit LAGE3 from Homo sapiens (Human).